The following is a 172-amino-acid chain: Peptidyl-prolyl cis-trans isomerase (172 aa).

Positions 10–168 constitute a PPIase cyclophilin-type domain; sequence YFDVYANEES…YRIEIRDCGV (159 aa).

The protein belongs to the cyclophilin-type PPIase family.

Its subcellular location is the cytoplasm. The enzyme catalyses [protein]-peptidylproline (omega=180) = [protein]-peptidylproline (omega=0). In terms of biological role, PPIases accelerate the folding of proteins. They catalyze the cis-trans isomerization of proline imidic peptide bonds in oligopeptides. The protein is Peptidyl-prolyl cis-trans isomerase (CPR1) of Encephalitozoon cuniculi (strain GB-M1) (Microsporidian parasite).